Reading from the N-terminus, the 363-residue chain is Histidine biosynthesis bifunctional protein HisB (363 aa).

The tract at residues 1–174 is histidinol-phosphatase; the sequence is MTQPTLFIDR…AVTNIGDRQP (174 aa). Aspartate 9 acts as the Nucleophile in catalysis. Aspartate 9 and aspartate 11 together coordinate Mg(2+). The active-site Proton donor is the aspartate 11. Zn(2+) contacts are provided by cysteine 92, histidine 94, cysteine 100, and cysteine 102. Residue aspartate 129 coordinates Mg(2+). An imidazoleglycerol-phosphate dehydratase region spans residues 175-363; it reads RYAEVVRKTK…NELPSSKGVL (189 aa).

The protein in the N-terminal section; belongs to the histidinol-phosphatase family. This sequence in the C-terminal section; belongs to the imidazoleglycerol-phosphate dehydratase family. Mg(2+) serves as cofactor. Zn(2+) is required as a cofactor.

It is found in the cytoplasm. The catalysed reaction is D-erythro-1-(imidazol-4-yl)glycerol 3-phosphate = 3-(imidazol-4-yl)-2-oxopropyl phosphate + H2O. The enzyme catalyses L-histidinol phosphate + H2O = L-histidinol + phosphate. It participates in amino-acid biosynthesis; L-histidine biosynthesis; L-histidine from 5-phospho-alpha-D-ribose 1-diphosphate: step 6/9. The protein operates within amino-acid biosynthesis; L-histidine biosynthesis; L-histidine from 5-phospho-alpha-D-ribose 1-diphosphate: step 8/9. In Actinobacillus pleuropneumoniae serotype 5b (strain L20), this protein is Histidine biosynthesis bifunctional protein HisB.